The chain runs to 431 residues: Trigger factor (431 aa).

Positions 164–249 (GNIAVIDFKG…IKEIKVKELP (86 aa)) constitute a PPIase FKBP-type domain.

Belongs to the FKBP-type PPIase family. Tig subfamily.

The protein localises to the cytoplasm. The enzyme catalyses [protein]-peptidylproline (omega=180) = [protein]-peptidylproline (omega=0). In terms of biological role, involved in protein export. Acts as a chaperone by maintaining the newly synthesized protein in an open conformation. Functions as a peptidyl-prolyl cis-trans isomerase. This Clostridium tetani (strain Massachusetts / E88) protein is Trigger factor.